Reading from the N-terminus, the 302-residue chain is Zygote arrest protein 2.S (302 aa).

Disordered regions lie at residues 15–46 (YGGNFGQNPHRPQAFPKNKQAAWKSNKSSEPP), 88–117 (VDTGVQCSLGPRTLRRPPPPPSSPVKPTDC), and 138–195 (LPQG…EPNK). Residues 159–178 (LKDRGPSPEEKEPETKEALE) show a composition bias toward basic and acidic residues. A 3CxxC-type zinc finger spans residues 203–288 (QKYGYFHCKD…QELCGRCKNK (86 aa)).

The protein belongs to the ZAR1 family. As to expression, oocyte-specific.

Its subcellular location is the cytoplasm. It localises to the cytoplasmic ribonucleoprotein granule. Its function is as follows. mRNA-binding protein required for maternal mRNA storage, translation and degradation during oocyte maturation. Probably promotes formation of some phase-separated membraneless compartment that stores maternal mRNAs in oocytes: acts by undergoing liquid-liquid phase separation upon binding to maternal mRNAs. Binds to the 3'-UTR of maternal mRNAs, inhibiting their translation. The chain is Zygote arrest protein 2.S from Xenopus laevis (African clawed frog).